The following is a 185-amino-acid chain: Translocon-associated protein subunit gamma (185 aa).

The residue at position 1 (Met-1) is an N-acetylmethionine. Residues 1 to 27 (MAPKGSSKQQSEEDLLLQDFSRNLSAK) lie on the Lumenal side of the membrane. 2 positions are modified to phosphoserine: Ser-7 and Ser-11. A helical membrane pass occupies residues 28-48 (SSALFFGNAFIVSAIPIWLYW). The Cytoplasmic segment spans residues 49-54 (RIWHMD). A helical membrane pass occupies residues 55–76 (LIQSAVLYSVMTLVSTYLVAFA). Residues 77-135 (YKNVKFVLKHKVAQKREDAVSKEVTRKLSEADNRKMSRKEKDERILWKKNEVADYEATT) lie on the Lumenal side of the membrane. Residue Ser-105 is modified to Phosphoserine. Residues 136 to 157 (FSIFYNNTLFLVVVIVASFFIL) form a helical membrane-spanning segment. Over 158-163 (KNFNPT) the chain is Cytoplasmic. Residues 164–184 (VNYILSISASSGLIALLSTGS) traverse the membrane as a helical segment.

Belongs to the TRAP-gamma family. As to quaternary structure, heterotetramer of TRAP-alpha, TRAP-beta, TRAP-delta and TRAP-gamma.

Its subcellular location is the endoplasmic reticulum membrane. TRAP proteins are part of a complex whose function is to bind calcium to the ER membrane and thereby regulate the retention of ER resident proteins. This chain is Translocon-associated protein subunit gamma (SSR3), found in Homo sapiens (Human).